A 431-amino-acid polypeptide reads, in one-letter code: Histidinol dehydrogenase (431 aa).

3 residues coordinate NAD(+): Y124, Q187, and N210. The substrate site is built by S236, Q258, and H261. Residues Q258 and H261 each coordinate Zn(2+). Residues E325 and H326 each act as proton acceptor in the active site. Substrate contacts are provided by H326, D359, E413, and H418. Residue D359 participates in Zn(2+) binding. H418 contacts Zn(2+).

The protein belongs to the histidinol dehydrogenase family. Zn(2+) serves as cofactor.

The enzyme catalyses L-histidinol + 2 NAD(+) + H2O = L-histidine + 2 NADH + 3 H(+). It participates in amino-acid biosynthesis; L-histidine biosynthesis; L-histidine from 5-phospho-alpha-D-ribose 1-diphosphate: step 9/9. In terms of biological role, catalyzes the sequential NAD-dependent oxidations of L-histidinol to L-histidinaldehyde and then to L-histidine. This chain is Histidinol dehydrogenase, found in Legionella pneumophila (strain Paris).